Consider the following 126-residue polypeptide: Large ribosomal subunit protein bL12 (126 aa).

It belongs to the bacterial ribosomal protein bL12 family. As to quaternary structure, homodimer. Part of the ribosomal stalk of the 50S ribosomal subunit. Forms a multimeric L10(L12)X complex, where L10 forms an elongated spine to which 2 to 4 L12 dimers bind in a sequential fashion. Binds GTP-bound translation factors.

Forms part of the ribosomal stalk which helps the ribosome interact with GTP-bound translation factors. Is thus essential for accurate translation. The protein is Large ribosomal subunit protein bL12 of Elusimicrobium minutum (strain Pei191).